The following is a 102-amino-acid chain: MSRRCELTAKGPQVGHKVSHSNIKTKRRFLPNLCNVTFISDALGRNVRLRVSTNAIKSVDHNGGLDAYLMKANAAALSPRALELKRAIEKKAAEAAPVAKAS.

Positions 1 to 20 (MSRRCELTAKGPQVGHKVSH) are disordered.

This sequence belongs to the bacterial ribosomal protein bL28 family.

The chain is Large ribosomal subunit protein bL28 from Bradyrhizobium sp. (strain ORS 278).